The following is a 572-amino-acid chain: Transmembrane glycoprotein NMB (572 aa).

An N-terminal signal peptide occupies residues 1 to 22; sequence MECLYYFLGFLLLAARLPLDAA. Residues 23-498 are Extracellular-facing; sequence KRFHDVLGNE…DPASPLRMAN (476 aa). The Cell attachment site motif lies at 64–66; it reads RGD. N93, N134, N146, N200, N249, N275, N296, N300, N306, and N312 each carry an N-linked (GlcNAc...) asparagine glycan. Residues 240–327 enclose the PKD domain; it reads VTMFQKNDRN…AAPGPCPPPP (88 aa). Positions 320–362 are disordered; that stretch reads PGPCPPPPPPPRPSKPTPSLATTLKSYDSNTPGPAGDNPLELS. Residues 321–335 show a composition bias toward pro residues; that stretch reads GPCPPPPPPPRPSKP. Over residues 338–351 the composition is skewed to polar residues; that stretch reads SLATTLKSYDSNTP. N459 and N467 each carry an N-linked (GlcNAc...) asparagine glycan. The helical transmembrane segment at 499–519 threads the bilayer; sequence SALISVGCLAIFVTVISLLVY. The Cytoplasmic portion of the chain corresponds to 520 to 572; it reads KKHKEYNPIENSPGNVVRSKGLSVFLNRAKAVFFPGNQEKDPLLKNQEFKGVS. S542 is subject to Phosphoserine.

Belongs to the PMEL/NMB family. As to expression, widely expressed, but very low expression, if any, in the brain. Expressed in the epidermis with higher levels in melanocytes compared with keratinocytes and Langerhans cells (at protein level). Expressed in peripheral blood, but not bone marrow mononuclear cells. Expressed in tissue macrophages, including liver Kuppfer cells and lung alveolar macrophages, in podocytes and in some cells of the ciliary body of the eye (at protein level). May be overexpressed in various cancers, including melanoma and glioblastoma multiforme.

It localises to the cell membrane. Its subcellular location is the melanosome membrane. It is found in the early endosome membrane. Could be a melanogenic enzyme. This chain is Transmembrane glycoprotein NMB (GPNMB), found in Homo sapiens (Human).